A 5263-amino-acid polypeptide reads, in one-letter code: Fibroin heavy chain (5263 aa).

The first 21 residues, 1–21, serve as a signal peptide directing secretion; the sequence is MRVKTFVILCCALQYVAYTNA. A highly repetitive region spans residues 149 to 5206; it reads AAVGAGAGAG…GSGAGAGGSV (5058 aa). A disulfide bridge connects residues cysteine 5260 and cysteine 5263.

As to quaternary structure, silk fibroin elementary unit consists in a disulfide-linked heavy and light chain and a p25 glycoprotein in molar ratios of 6:6:1. This results in a complex of approximately 2.3 MDa. Post-translationally, the interchain disulfide bridge is essential for the intracellular transport and secretion of fibroin. In terms of tissue distribution, produced exclusively in the posterior (PSG) section of silk glands, which are essentially modified salivary glands.

Core component of the silk filament; a strong, insoluble and chemically inert fiber. This chain is Fibroin heavy chain (FIBH), found in Bombyx mori (Silk moth).